A 501-amino-acid polypeptide reads, in one-letter code: MPLVKRNIEPRHLCRGALPEGVTSELECVTNSTLAAIIRQLSSLSKHAEDIFGELFNEANNFYIRANSLQDRIDRLAVKVTQLDSTVEEVSLQDINMKKAFKSSTIQDQQVVSKNSIPNPVADIYNQSDKPPPLSILTPYRDDKKDGLKFYTDPSYFFDLWKEKMLQDTEDKRKEKRRQKEQKRVDGTTREVKKVRKARNRRQEWNMMAYDKELRPDNRLSQSVHHGASSEGSLSPDTRSHTSDVTDYSYPATPNHALQAQPATPSYTAGDAPLHGTTNQGAEHEYRPSSASARHMALNRPQQPPPPPPPQAPEGSQASTSVAPADYGMLPAQIIEYYSPSGPPPPPPPPMIPSAQTAFVSPLQMPTQPPFPASAVSTYPTPPHQPSTGLLATAPPPPGPPPPPPGPPGPSSLSSSPMHGPPVAEAKRPEPAQPPISDARSDLLAAIRMGIQLKKVQEQREQEAKREPVGNDVATILSRRIAVEYSDSDDDSEFDENDWSD.

Residues 57 to 93 are a coiled coil; it reads NEANNFYIRANSLQDRIDRLAVKVTQLDSTVEEVSLQ. Tyr-151 bears the Phosphotyrosine; by ABL1 mark. Residues 162 to 206 are a coiled coil; it reads KEKMLQDTEDKRKEKRRQKEQKRVDGTTREVKKVRKARNRRQEWN. A disordered region spans residues 170-443; that stretch reads EDKRKEKRRQ…PPISDARSDL (274 aa). Residues 182 to 192 are compositionally biased toward basic and acidic residues; sequence QKRVDGTTREV. Over residues 219–237 the composition is skewed to polar residues; it reads RLSQSVHHGASSEGSLSPD. Residue Tyr-248 is modified to Phosphotyrosine; by ABL1. Over residues 256–267 the composition is skewed to polar residues; the sequence is HALQAQPATPSY. Pro residues predominate over residues 302 to 312; sequence QQPPPPPPPQA. Phosphotyrosine; by ABL1 is present on Tyr-337. Pro residues-rich tracts occupy residues 341–352 and 394–410; these read SGPPPPPPPPMI and APPP…PPGP. A compositionally biased stretch (low complexity) spans 411–422; sequence SSLSSSPMHGPP. Residues 439–456 form the WH2 domain; sequence ARSDLLAAIRMGIQLKKV. Position 485 is a phosphotyrosine; by ABL1 (Tyr-485).

This sequence belongs to the SCAR/WAVE family. As to quaternary structure, binds actin and the Arp2/3 complex. Phosphorylation by ABL1 promotes lamellipodia formation and cell migration.

Its subcellular location is the cytoplasm. It localises to the cytoskeleton. Its function is as follows. Downstream effector molecules involved in the transmission of signals from tyrosine kinase receptors and small GTPases to the actin cytoskeleton. Plays a role in the regulation of cell morphology and cytoskeletal organization. Required in the control of cell shape. The sequence is that of Actin-binding protein WASF3 (Wasf3) from Mus musculus (Mouse).